Consider the following 265-residue polypeptide: Glutamate racemase (265 aa).

Substrate is bound by residues 9–10 and 41–42; these read DS and YS. C73 acts as the Proton donor/acceptor in catalysis. Position 74–75 (74–75) interacts with substrate; it reads NT. C184 (proton donor/acceptor) is an active-site residue. Residue 185 to 186 participates in substrate binding; it reads TH.

The protein belongs to the aspartate/glutamate racemases family.

The enzyme catalyses L-glutamate = D-glutamate. It participates in cell wall biogenesis; peptidoglycan biosynthesis. Functionally, provides the (R)-glutamate required for cell wall biosynthesis. The protein is Glutamate racemase of Haemophilus ducreyi (strain 35000HP / ATCC 700724).